We begin with the raw amino-acid sequence, 294 residues long: Sperm acrosome membrane-associated protein 1 (294 aa).

The N-terminal stretch at 1 to 29 (MSPRGTGCSAGLLMTVGWLLLAGLQSARG) is a signal peptide. Topologically, residues 30-221 (TNVTAAVQDA…LPATDAALIF (192 aa)) are extracellular. Asn-31 carries an N-linked (GlcNAc...) asparagine glycan. Positions 42–70 (AHEGEGEEETENNDSETAENYAPPETEDV) are disordered. The segment covering 46-58 (EGEEETENNDSET) has biased composition (acidic residues). Residues 222 to 242 (VLTIGVIICVFIIFLLIFIII) form a helical membrane-spanning segment. Topologically, residues 243–294 (NWAAVKAFWGAKASTPEVQSEQSSVRYKDSTSLDQLPTEMPGEDDALSEWNE) are cytoplasmic. Ser-256 bears the Phosphoserine mark. The segment covering 258 to 267 (PEVQSEQSSV) has biased composition (polar residues). A disordered region spans residues 258 to 294 (PEVQSEQSSVRYKDSTSLDQLPTEMPGEDDALSEWNE). Tyr-269 is subject to Phosphotyrosine. The span at 283–294 (PGEDDALSEWNE) shows a compositional bias: acidic residues. At Ser-290 the chain carries Phosphoserine.

In terms of assembly, interacts with CYLC1; the interaction may be relevant for proper acrosome attachment to the nuclear envelope. N-glycosylated. In terms of tissue distribution, testis specific.

The protein resides in the cytoplasmic vesicle. It localises to the secretory vesicle. It is found in the acrosome inner membrane. In terms of biological role, plays a role in acrosome formation and establishment of normal sperm morphology during spermatogenesis. Important for male fertility. The sequence is that of Sperm acrosome membrane-associated protein 1 (SPACA1) from Homo sapiens (Human).